Reading from the N-terminus, the 358-residue chain is Feruloyl CoA ortho-hydroxylase F6H1-2 (358 aa).

The region spanning 200 to 308 (TKESLLMGSK…RISVPIFVNP (109 aa)) is the Fe2OG dioxygenase domain. Tyr-216 contacts 2-oxoglutarate. His-231, Asp-233, and His-289 together coordinate Fe cation. The 2-oxoglutarate site is built by Arg-299 and Ser-301.

Belongs to the iron/ascorbate-dependent oxidoreductase family. The cofactor is L-ascorbate. Fe(2+) is required as a cofactor. As to expression, expressed at low levels in tubers, underground stems, leaves and petioles.

It carries out the reaction (E)-feruloyl-CoA + 2-oxoglutarate + O2 = (E)-6-hydroxyferuloyl-CoA + succinate + CO2. It functions in the pathway phenylpropanoid metabolism. In terms of biological role, 2-oxoglutarate (OG)- and Fe(II)-dependent dioxygenase (2OGD) involved in scopoletin biosynthesis. Converts feruloyl CoA into 6'-hydroxyferuloyl CoA, and, at low efficiency, caffeoyl-CoA into 6'-hydroxycaffeate, but has no activity with p-coumaroyl-CoA. The protein is Feruloyl CoA ortho-hydroxylase F6H1-2 of Ipomoea batatas (Sweet potato).